Consider the following 516-residue polypeptide: Coiled-coil domain-containing protein 82 (516 aa).

Basic residues predominate over residues 1–13 (MVHARRHETRKNS). A disordered region spans residues 1–265 (MVHARRHETR…DYGDAENEDD (265 aa)). Residues 38 to 62 (DSDEELDSDEEIGSDEDLDGGESID) show a composition bias toward acidic residues. The span at 78–96 (IPEKETELNLIKVESERSN) shows a compositional bias: basic and acidic residues. Positions 98 to 107 (KCHMNTSSSS) are enriched in polar residues. Residues 113–135 (MNKTKHNDLPDDEAHPGQAEGHH) are compositionally biased toward basic and acidic residues. Residues S170 and S194 each carry the phosphoserine modification. A Phosphothreonine modification is found at T202. Positions 204 to 232 (EKSPAARKREYHQKLQELCERSRQKQRHN) form a coiled coil. Basic and acidic residues predominate over residues 215–226 (HQKLQELCERSR). Residues 248-265 (TDEDEDDDDYGDAENEDD) are compositionally biased toward acidic residues. Phosphoserine is present on S301.

In Rattus norvegicus (Rat), this protein is Coiled-coil domain-containing protein 82 (Ccdc82).